A 205-amino-acid polypeptide reads, in one-letter code: Tegument protein UL51 homolog (205 aa).

C4 is lipidated: S-palmitoyl cysteine; by host.

It belongs to the herpesviridae UL51 family. In terms of assembly, oligomerizes. Interacts with U75; this interaction mediates U75 incorporation to virions. Post-translationally, phosphorylated. In terms of processing, palmitoylation is necessary for Golgi localization.

The protein localises to the virion tegument. Its subcellular location is the host cytoplasm. It is found in the host Golgi apparatus. Plays several roles during the time course of infection, including egress of virus particles from the perinuclear space and secondary envelopment of cytoplasmic capsids that bud into specific trans-Golgi network (TGN)-derived membranes. This is Tegument protein UL51 homolog (U44) from Homo sapiens (Human).